The following is a 368-amino-acid chain: MAKRDYYEVLGLDKSASAQDIKRAYRKLARQYHPDINQEADAADKFKEIGEAYEVLSDEQKRAQYDRFGFEGANQFGGGGDFQGGFGDIFDMFFGGGGRRQDPNAPRRGEDYQYVVDLDFMESVTGKTETIELEIEVECDTCMGSGAKPGTKPETCNRCGGSGVETVEQNTILGRMVNQRPCSQCHGSGKTIKEKCPTCHGSGHVKKKQTVEVKIPAGIDNGQQIRLSGKGGPGVNGGPAGDLYVVVRVRAHEIFERVDQHIAMDMPITFAQAALGAEIEVPTVHGNVSLKVPAGTQTGSKFRLRGKGMPSVRGGANGDQYVSVIVMTPKNMTDRQKELLREFEEISGESGVEEEHGMFQKMKKFFSH.

The J domain occupies 5-69 (DYYEVLGLDK…QKRAQYDRFG (65 aa)). Residues 126 to 208 (GKTETIELEI…CHGSGHVKKK (83 aa)) form a CR-type zinc finger. Residues Cys139, Cys142, Cys156, Cys159, Cys182, Cys185, Cys196, and Cys199 each contribute to the Zn(2+) site. CXXCXGXG motif repeat units follow at residues 139–146 (CDTCMGSG), 156–163 (CNRCGGSG), 182–189 (CSQCHGSG), and 196–203 (CPTCHGSG).

Belongs to the DnaJ family. Homodimer. Requires Zn(2+) as cofactor.

The protein localises to the cytoplasm. Its function is as follows. Participates actively in the response to hyperosmotic and heat shock by preventing the aggregation of stress-denatured proteins and by disaggregating proteins, also in an autonomous, DnaK-independent fashion. Unfolded proteins bind initially to DnaJ; upon interaction with the DnaJ-bound protein, DnaK hydrolyzes its bound ATP, resulting in the formation of a stable complex. GrpE releases ADP from DnaK; ATP binding to DnaK triggers the release of the substrate protein, thus completing the reaction cycle. Several rounds of ATP-dependent interactions between DnaJ, DnaK and GrpE are required for fully efficient folding. Also involved, together with DnaK and GrpE, in the DNA replication of plasmids through activation of initiation proteins. This is Chaperone protein DnaJ from Exiguobacterium sp. (strain ATCC BAA-1283 / AT1b).